We begin with the raw amino-acid sequence, 395 residues long: Flap endonuclease 1 (395 aa).

An N-domain region spans residues 1–108; the sequence is MGILGLSKLL…DELEMRRQKA (108 aa). Asp-34 is a Mg(2+) binding site. Arg-74 contacts DNA. Asp-90, Glu-162, Glu-164, Asp-183, and Asp-185 together coordinate Mg(2+). The interval 126 to 257 is I-domain; the sequence is MMEKMSKRTV…QKAWEGIQRY (132 aa). A DNA-binding site is contributed by Glu-162. DNA-binding residues include Gly-235 and Asp-237. Mg(2+) is bound at residue Asp-237. The tract at residues 340–348 is interaction with PCNA; that stretch reads TQGRLDSFF.

Belongs to the XPG/RAD2 endonuclease family. FEN1 subfamily. As to quaternary structure, interacts with PCNA. Three molecules of FEN1 bind to one PCNA trimer with each molecule binding to one PCNA monomer. PCNA stimulates the nuclease activity without altering cleavage specificity. It depends on Mg(2+) as a cofactor. Phosphorylated. Phosphorylation upon DNA damage induces relocalization to the nuclear plasma.

Its subcellular location is the nucleus. The protein localises to the nucleolus. It localises to the nucleoplasm. It is found in the mitochondrion. Its function is as follows. Structure-specific nuclease with 5'-flap endonuclease and 5'-3' exonuclease activities involved in DNA replication and repair. During DNA replication, cleaves the 5'-overhanging flap structure that is generated by displacement synthesis when DNA polymerase encounters the 5'-end of a downstream Okazaki fragment. It enters the flap from the 5'-end and then tracks to cleave the flap base, leaving a nick for ligation. Also involved in the long patch base excision repair (LP-BER) pathway, by cleaving within the apurinic/apyrimidinic (AP) site-terminated flap. Acts as a genome stabilization factor that prevents flaps from equilibrating into structures that lead to duplications and deletions. Also possesses 5'-3' exonuclease activity on nicked or gapped double-stranded DNA, and exhibits RNase H activity. Also involved in replication and repair of rDNA and in repairing mitochondrial DNA. The sequence is that of Flap endonuclease 1 from Leishmania infantum.